Reading from the N-terminus, the 376-residue chain is Lipoprotein p33 (376 aa).

Positions 1–30 (MKIKKIKLLKALALTGAFGIVATVPVIVSS) are cleaved as a signal peptide. Residue Cys-31 is the site of N-palmitoyl cysteine attachment. Cys-31 carries S-diacylglycerol cysteine lipidation. Residues 33 to 59 (STDNNGGTGDNNTGGGGSGTDQQQGTT) form a disordered region. The segment covering 38-51 (GGTGDNNTGGGGSG) has biased composition (gly residues).

It belongs to the p35 lipoprotein family.

The protein localises to the cell membrane. The chain is Lipoprotein p33 from Malacoplasma penetrans (strain HF-2) (Mycoplasma penetrans).